The chain runs to 589 residues: Proton pump-interactor 2 (589 aa).

A coiled-coil region spans residues 205 to 245 (EDSLAEKEASINRVKSMAVELNEVKKELDAITWKINHLSDK). 4 stretches are compositionally biased toward basic and acidic residues: residues 370-383 (KGGE…REDS), 395-408 (TDKR…KAMD), 426-450 (VYEK…REEQ), and 504-534 (ESDH…KERS). Disordered stretches follow at residues 370–450 (KGGE…REEQ) and 485–534 (KECE…KERS). Positions 431 to 500 (KKEEEEVDEE…AKKKAAANSS (70 aa)) form a coiled coil. The helical transmembrane segment at 568-588 (WVWGLSSAALAVALFLVVLLL) threads the bilayer.

The protein belongs to the plant Proton pump-interactor protein family. As to expression, expressed in seedlings and flowers.

The protein resides in the cell membrane. The protein localises to the endoplasmic reticulum membrane. May regulate plasma membrane ATPase activity. This Arabidopsis thaliana (Mouse-ear cress) protein is Proton pump-interactor 2 (PPI2).